Consider the following 692-residue polypeptide: MGKAKNKKKVLKNKQQVLVPGILFVHPKKGFGFVSPDQPDLYPFDIFVPASDLKGALDGDHVLVALPFSQRGGEKRKGVIHKVLSRGKTVLVGTIISLISPTLAMVCVNAISPEVPLKAELLPKRTYKIGDRLLLKTPGWKENYPSKEPPPLAMLEFMGNISNAKTDFPVIKAEFSITEEFPEAVVQEASQFLQKHVTQALHSRKDLRDLLCFTIDSASAKDFDDAVSLTYDHEGNYILGVHIADVSHYVTPNSALDQEAAKRCNSIYFPGKVIPMLPSALSDNLCSLKPNVDRLAVSVFMTFSKEGFLSDYRILRSVIRSKYRMTYDEVDEIIEKKLAHPISKTILEMAELSRIFSDIREQRGCTRLVLPSFTMSLDNLQEPVALVENKQTAAHKLIEEFMLKANEVIAYHISHQGITMPFRIHEPPNEENLLLFRETAKAMGFTITQTPTQEPDYQYLLQETSAGHPLEPILHSQFVRSMKTASYSTENKGHYGLCLDYYTHFTSPIRRYVDLIVHRLLFHPLSVEEGHLEQIVRACSSQERVAAKAEGAFINIKKARFLKKFLDEQPATLYKAFIITVSPEGLSFVLPELCHEGFIPAAKLPKKYVIKTKLGLEELPEHLLPGIPISVQLASVTLLTQAIEWTLIESKERSSSKKKKAKAKSNATQVKKKSSSKKKKAVSKAKKNRGGK.

Residues 204-525 (RKDLRDLLCF…IVHRLLFHPL (322 aa)) enclose the RNB domain. An S1 motif domain is found at 563–648 (KKFLDEQPAT…LTQAIEWTLI (86 aa)). The interval 651-692 (KERSSSKKKKAKAKSNATQVKKKSSSKKKKAVSKAKKNRGGK) is disordered. Residues 670–692 (VKKKSSSKKKKAVSKAKKNRGGK) are compositionally biased toward basic residues.

Belongs to the RNR ribonuclease family. RNase R subfamily.

The protein resides in the cytoplasm. The enzyme catalyses Exonucleolytic cleavage in the 3'- to 5'-direction to yield nucleoside 5'-phosphates.. Functionally, 3'-5' exoribonuclease that releases 5'-nucleoside monophosphates and is involved in maturation of structured RNAs. This Chlamydia muridarum (strain MoPn / Nigg) protein is Ribonuclease R.